A 201-amino-acid chain; its full sequence is Interferon-induced transmembrane protein 10 (201 aa).

Disordered regions lie at residues 1 to 23 (MAQG…DGTQ) and 60 to 88 (AAPA…KTDS). Over 1 to 127 (MAQGPSQCPA…PDTTEVNDYY (127 aa)) the chain is Extracellular. Residues 63–73 (APEPSASPPMA) are compositionally biased toward pro residues. A helical transmembrane segment spans residues 128 to 148 (LWSIFNFVYLNFCCLGFIALA). Residues Cys-140 and Cys-141 are each lipidated (S-palmitoyl cysteine). At 149–173 (YSLKVRDKKLLNDLNGAVEDAKTAR) the chain is on the cytoplasmic side. The chain crosses the membrane as a helical span at residues 174-194 (LFNITSSALAASCIILIFIFL). Topologically, residues 195–201 (RYPLTDY) are extracellular.

This sequence belongs to the CD225/Dispanin family.

The protein resides in the cell membrane. The sequence is that of Interferon-induced transmembrane protein 10 (Ifitm10) from Mus musculus (Mouse).